The following is a 93-amino-acid chain: Large ribosomal subunit protein eL42 (93 aa).

Zn(2+) is bound by residues Cys-11, Cys-14, Cys-71, and Cys-74. The C4-type zinc finger occupies 11-74 (CRYCGKHTLH…VNIRFRCTEC (64 aa)).

It belongs to the eukaryotic ribosomal protein eL42 family. In terms of assembly, part of the 50S ribosomal subunit. The cofactor is Zn(2+).

Functionally, binds to the 23S rRNA. This chain is Large ribosomal subunit protein eL42, found in Archaeoglobus fulgidus (strain ATCC 49558 / DSM 4304 / JCM 9628 / NBRC 100126 / VC-16).